A 70-amino-acid chain; its full sequence is Putative membrane protein insertion efficiency factor (70 aa).

It belongs to the UPF0161 family.

It is found in the cell inner membrane. Functionally, could be involved in insertion of integral membrane proteins into the membrane. This is Putative membrane protein insertion efficiency factor from Desulforapulum autotrophicum (strain ATCC 43914 / DSM 3382 / VKM B-1955 / HRM2) (Desulfobacterium autotrophicum).